Reading from the N-terminus, the 197-residue chain is Holliday junction branch migration complex subunit RuvA (197 aa).

Residues 1–64 are domain I; it reads MYEYIKGKYI…EDFIGVYGFL (64 aa). Residues 65–144 form a domain II region; it reads TKDELSMFKL…DILEEDDEQI (80 aa). The flexible linker stretch occupies residues 145 to 149; it reads INKVT. A domain III region spans residues 149 to 197; that stretch reads TDDKKVLEAVAALVTLGYSEKEANKVINSCDKNNSLEQIIKEALKYLMK.

It belongs to the RuvA family. In terms of assembly, homotetramer. Forms an RuvA(8)-RuvB(12)-Holliday junction (HJ) complex. HJ DNA is sandwiched between 2 RuvA tetramers; dsDNA enters through RuvA and exits via RuvB. An RuvB hexamer assembles on each DNA strand where it exits the tetramer. Each RuvB hexamer is contacted by two RuvA subunits (via domain III) on 2 adjacent RuvB subunits; this complex drives branch migration. In the full resolvosome a probable DNA-RuvA(4)-RuvB(12)-RuvC(2) complex forms which resolves the HJ.

The protein resides in the cytoplasm. In terms of biological role, the RuvA-RuvB-RuvC complex processes Holliday junction (HJ) DNA during genetic recombination and DNA repair, while the RuvA-RuvB complex plays an important role in the rescue of blocked DNA replication forks via replication fork reversal (RFR). RuvA specifically binds to HJ cruciform DNA, conferring on it an open structure. The RuvB hexamer acts as an ATP-dependent pump, pulling dsDNA into and through the RuvAB complex. HJ branch migration allows RuvC to scan DNA until it finds its consensus sequence, where it cleaves and resolves the cruciform DNA. This chain is Holliday junction branch migration complex subunit RuvA, found in Clostridium botulinum (strain Kyoto / Type A2).